The sequence spans 274 residues: 2,3,4,5-tetrahydropyridine-2,6-dicarboxylate N-succinyltransferase (274 aa).

Substrate contacts are provided by R104 and D141.

This sequence belongs to the transferase hexapeptide repeat family. In terms of assembly, homotrimer.

It is found in the cytoplasm. The enzyme catalyses (S)-2,3,4,5-tetrahydrodipicolinate + succinyl-CoA + H2O = (S)-2-succinylamino-6-oxoheptanedioate + CoA. It functions in the pathway amino-acid biosynthesis; L-lysine biosynthesis via DAP pathway; LL-2,6-diaminopimelate from (S)-tetrahydrodipicolinate (succinylase route): step 1/3. This chain is 2,3,4,5-tetrahydropyridine-2,6-dicarboxylate N-succinyltransferase, found in Idiomarina loihiensis (strain ATCC BAA-735 / DSM 15497 / L2-TR).